The primary structure comprises 118 residues: MNYEQPPAYTGPGPAPGYPAQGYPAQGYPTQGYPAQGYPPQGYPAQGYPAQGYPNYPPGPPGPYTAQPGYQGYPQPGPPTNTVYVVEQGRRDDQSGEQACLATCWAALCCCCLCDMLT.

2 stretches are compositionally biased toward low complexity: residues 1-54 and 64-74; these read MNYE…QGYP and YTAQPGYQGYP. The tract at residues 1–82 is disordered; the sequence is MNYEQPPAYT…YPQPGPPTNT (82 aa). Residues 95–112 traverse the membrane as a helical segment; sequence SGEQACLATCWAALCCCC.

This sequence belongs to the CYSTM1 family.

The protein resides in the membrane. The protein is Cysteine-rich and transmembrane domain-containing protein 1 (cystm1) of Danio rerio (Zebrafish).